The following is a 137-amino-acid chain: Protein MGF 110-7L (137 aa).

Positions 1 to 20 are cleaved as a signal peptide; the sequence is MLVIILGIIGLLASSNLVSS. Residues Asn69, Asn70, and Asn105 are each glycosylated (N-linked (GlcNAc...) asparagine; by host).

It belongs to the asfivirus MGF 110 family.

Its function is as follows. Plays a role in virus cell tropism, and may be required for efficient virus replication in macrophages. This chain is Protein MGF 110-7L, found in African swine fever virus (isolate Tick/South Africa/Pretoriuskop Pr4/1996) (ASFV).